The primary structure comprises 720 residues: DNA replication licensing factor mcm7 (720 aa).

The C4-type zinc-finger motif lies at Cys-183–Cys-210. The MCM domain maps to Phe-331–Thr-537. Tyr-344, Gly-383, Ala-385, Lys-386, Ser-387, Asn-488, Arg-513, and Arg-603 together coordinate ATP. The short motif at Ser-512 to Asp-515 is the Arginine finger element.

Belongs to the MCM family. Component of the mcm2-7 complex (RLF-M). The complex forms a toroidal hexameric ring with the proposed subunit order mcm2-mcm6-mcm4-mcm7-mcm3-mcm5. The heterodimer of mmcm3/mcm5 interacts with mcm4, mmcm6, mcm7 and weakly with mcm2. The N-terminus is required for interaction with mmcm3, though this interaction may not be direct, and remains in a complex with mmcm3 throughout the cell cycle. Begins to associate with zmcm6 at the neurula stage. Component of the replisome complex. Component of the CMG helicase complex, composed of the mcm2-7 complex, the GINS complex and cdc45. Ubiquitinated by traip when forks converge following formation of DNA interstrand cross-links. Short ubiquitin chains on mcm7 promote recruitment of DNA glycosylase neil3. If the interstrand cross-link cannot be cleaved by neil3, the ubiquitin chains continue to grow on mcm7, promoting the unloading of the CMG helicase complex by the vcp/p97 ATPase.

The protein resides in the nucleus. It localises to the chromosome. It carries out the reaction ATP + H2O = ADP + phosphate + H(+). Its function is as follows. Acts as a component of the mcm2-7 complex (mcm complex) which is the putative replicative helicase essential for 'once per cell cycle' DNA replication initiation and elongation in eukaryotic cells. The active ATPase sites in the mcm2-7 ring are formed through the interaction surfaces of two neighboring subunits such that a critical structure of a conserved arginine finger motif is provided in trans relative to the ATP-binding site of the Walker A box of the adjacent subunit. The six ATPase active sites, however, are likely to contribute differentially to the complex helicase activity. The existence of maternal and zygotic forms of mcm3 and mcm6 suggests that specific forms of mcm2-7 complexes may be used during different stages of development. This Xenopus tropicalis (Western clawed frog) protein is DNA replication licensing factor mcm7.